A 293-amino-acid polypeptide reads, in one-letter code: Protease HtpX homolog (293 aa).

Helical transmembrane passes span 7–26 and 30–49; these read ASLL…ALLG and GMVM…WYYS. Histidine 131 provides a ligand contact to Zn(2+). The active site involves glutamate 132. Residue histidine 135 participates in Zn(2+) binding. 2 consecutive transmembrane segments (helical) span residues 148 to 168 and 180 to 200; these read ATLA…FWFF and IGAL…QLGI. A Zn(2+)-binding site is contributed by glutamate 205.

Belongs to the peptidase M48B family. Requires Zn(2+) as cofactor.

It localises to the cell inner membrane. This is Protease HtpX homolog from Acaryochloris marina (strain MBIC 11017).